Reading from the N-terminus, the 217-residue chain is MNLAAIAENYSMHNGESGAIVPYVPPPYNFASAPTFSQRTSQMESVSLGILNQAMSSTTGASGALKDEKAAFGAMAEALRDPEPIRQIKKQVGIRTLKNLKMELATMRRKKSALKIMIFISGCVTLATSMVGGLSIVDDQILDDYKKNDWLMKTIHGLNLLCTTVLLAAGKISDKIQEEISRTKRDIAKRESYVSAASMSWNGDTEMLLQGTKYGES.

The protein belongs to the orbivirus NS3 family.

Functionally, may play a role in the release of virions from infected cells. This African horse sickness virus 9 (AHSV-9) protein is Non-structural protein NS3 (Segment-10).